The sequence spans 795 residues: Phenylalanine--tRNA ligase beta subunit (795 aa).

Positions 39–148 (AGEFTGVKVG…EGTTLGADVR (110 aa)) constitute a tRNA-binding domain. The B5 domain maps to 401-476 (PKANTVELRR…RIYGYNNIPN (76 aa)). 4 residues coordinate Mg(2+): aspartate 454, aspartate 460, glutamate 463, and glutamate 464. In terms of domain architecture, FDX-ACB spans 701–794 (SKFPANRRDI…IGEKFSATLR (94 aa)).

The protein belongs to the phenylalanyl-tRNA synthetase beta subunit family. Type 1 subfamily. Tetramer of two alpha and two beta subunits. Mg(2+) is required as a cofactor.

The protein resides in the cytoplasm. The catalysed reaction is tRNA(Phe) + L-phenylalanine + ATP = L-phenylalanyl-tRNA(Phe) + AMP + diphosphate + H(+). This chain is Phenylalanine--tRNA ligase beta subunit, found in Aliivibrio fischeri (strain ATCC 700601 / ES114) (Vibrio fischeri).